A 178-amino-acid polypeptide reads, in one-letter code: Caveolin-1 (178 aa).

Residue S2 is modified to N-acetylserine. S2 is modified (phosphoserine). Positions 2-94 (SGGKYVDSEG…WKASFTTFTV (93 aa)) are required for homooligomerization. At 2-104 (SGGKYVDSEG…TKYWFYRLLS (103 aa)) the chain is on the cytoplasmic side. At K5 the chain carries N6-acetyllysine; alternate. K5 participates in a covalent cross-link: Glycyl lysine isopeptide (Lys-Gly) (interchain with G-Cter in ubiquitin); alternate. Y6 bears the Phosphotyrosine mark. S9 is modified (phosphoserine). Y14 bears the Phosphotyrosine; by ABL1 mark. Y25 is modified (phosphotyrosine). Glycyl lysine isopeptide (Lys-Gly) (interchain with G-Cter in ubiquitin) cross-links involve residues K26 and K30. Phosphoserine is present on S37. Residues K39, K47, and K57 each participate in a glycyl lysine isopeptide (Lys-Gly) (interchain with G-Cter in ubiquitin) cross-link. The interaction with CAVIN3 stretch occupies residues 82–94 (DGIWKASFTTFTV). The segment at residues 105–125 (ALFGIPMALIWGIYFAILSFL) is an intramembrane region (helical). Residues 126-178 (HIWAVVPCIKSFLIEIQCISRVYSIYIHTVCDPLFEAIGKIFSNVRIGLQKEI) lie on the Cytoplasmic side of the membrane. Residues 131–142 (VPCIKSFLIEIQ) form an interacts with SPRY1, SPRY2, SPRY3 and SPRY4 region. Residues C133, C143, and C156 are each lipidated (S-palmitoyl cysteine). Residues 149 to 160 (SIYIHTVCDPLF) are interacts with SPRY1, SPRY2, and SPRY4. An interacts with SPRY1, SPRY2, SPRY3 and SPRY4 region spans residues 167–178 (FSNVRIGLQKEI).

This sequence belongs to the caveolin family. As to quaternary structure, homooligomer. Interacts with GLIPR2. Interacts with NOSTRIN. Interacts with SNAP25 and STX1A. Interacts (via the N-terminus) with DPP4; the interaction is direct. Interacts with CTNNB1, CDH1 and JUP. Interacts with PACSIN2; this interaction induces membrane tubulation. Interacts with SLC7A9. Interacts with BMX and BTK. Interacts with TGFBR1. Interacts with CAVIN3 (via leucine-zipper domain) in a cholesterol-sensitive manner. Interacts with CAVIN1. Interacts with EHD2 in a cholesterol-dependent manner. Forms a ternary complex with UBXN6 and VCP; mediates CAV1 targeting to lysosomes for degradation. Interacts with ABCG1; this interaction regulates ABCG1-mediated cholesterol efflux. Interacts with NEU3; this interaction enhances NEU3 sialidase activity within caveola. Interacts (via C-terminus) with SPRY1, SPRY2 (via C-terminus), SPRY3, and SPRY4. Interacts with IGFBP5; this interaction allows trafficking of IGFBP5 from the plasma membrane to the nucleus. Post-translationally, phosphorylated at Tyr-14 by ABL1 in response to oxidative stress. Ubiquitinated. Undergo monoubiquitination and multi- and/or polyubiquitination. Monoubiquitination of N-terminal lysines promotes integration in a ternary complex with UBXN6 and VCP which promotes oligomeric CAV1 targeting to lysosomes for degradation. Ubiquitinated by ZNRF1; leading to degradation and modulation of the TLR4-mediated immune response.

It is found in the golgi apparatus membrane. The protein resides in the cell membrane. Its subcellular location is the membrane. The protein localises to the caveola. It localises to the membrane raft. Functionally, may act as a scaffolding protein within caveolar membranes. Forms a stable heterooligomeric complex with CAV2 that targets to lipid rafts and drives caveolae formation. Mediates the recruitment of CAVIN proteins (CAVIN1/2/3/4) to the caveolae. Interacts directly with G-protein alpha subunits and can functionally regulate their activity. Involved in the costimulatory signal essential for T-cell receptor (TCR)-mediated T-cell activation. Its binding to DPP4 induces T-cell proliferation and NF-kappa-B activation in a T-cell receptor/CD3-dependent manner. Recruits CTNNB1 to caveolar membranes and may regulate CTNNB1-mediated signaling through the Wnt pathway. Negatively regulates TGFB1-mediated activation of SMAD2/3 by mediating the internalization of TGFBR1 from membrane rafts leading to its subsequent degradation. Binds 20(S)-hydroxycholesterol (20(S)-OHC). This Saimiri boliviensis boliviensis (Bolivian squirrel monkey) protein is Caveolin-1 (CAV1).